A 455-amino-acid polypeptide reads, in one-letter code: MKFYTYSGETAAEALKIAQSHHGVDTLVFKTQEIRKKTLTSSGLYEIVVAVEEEENKKAPLIPESLYDEELNEEDVVMQLSSTVEEMRKLAGVSSNQRNYTFSKNKTLLEKDAPLEDTPLEANKQDALLQALKDEANHKKEREKREVKQEEEIKDINAQLSKIRDSLKLIQNMFWDEKNPNSVNIPQEFAEIYKLAKQSGMKSSHLDEIMQLSLELMPLRMRENSVTIKRYFREVLRKIILCRPEDLNLRQKRILMLVGPTGVGKTTTLAKLAARYSRMLAKKYKVGIITLDNYRIGALEQLSWYANKMKMSIEAVIDAKDFAKEIEALEYCDFILVDTTGHSQYDKEKIAGLKEFIDGGYNIDVSLVLSVTTKYEDMKDIYDSFGVLGIDTLIFTKLDESRGLGNLFSLVHESQKPISYLSVGQEVPMDLKVATNEYLVDCMLDGFSNPNKEQA.

GTP is bound by residues 259–266 (GPTGVGKT), 338–342 (DTTGH), and 396–399 (TKLD).

This sequence belongs to the GTP-binding SRP family.

Its subcellular location is the cell membrane. In terms of biological role, necessary for flagellar biosynthesis. May be involved in translocation of the flagellum. In Helicobacter pylori (strain J99 / ATCC 700824) (Campylobacter pylori J99), this protein is Flagellar biosynthesis protein FlhF (flhF).